The sequence spans 445 residues: Cyclic GMP-AMP phosphodiesterase SMPDL3A (445 aa).

Positions 1–22 are cleaved as a signal peptide; it reads MALPGNFLCCLLVAWLCDPGLG. The Zn(2+) site is built by D42 and H44. A disulfide bridge connects residues C59 and C78. N-linked (GlcNAc...) asparagine glycosylation occurs at N66. D107 contacts Zn(2+). ATP is bound at residue H111. N128 is a glycosylation site (N-linked (GlcNAc...) asparagine). Zn(2+) is bound at residue N148. N148 and H149 together coordinate ATP. 2 N-linked (GlcNAc...) asparagine glycosylation sites follow: N219 and N235. 3 residues coordinate Zn(2+): H249, H290, and H292. Residues N353 and N364 are each glycosylated (N-linked (GlcNAc...) asparagine). Disulfide bonds link C417/C421 and C427/C440.

This sequence belongs to the acid sphingomyelinase family. As to quaternary structure, monomer. Homodimer; homodimerizes following 2',3'-cGAMP-binding. The cofactor is Zn(2+).

It is found in the secreted. The enzyme catalyses 2',3'-cGAMP + H2O = 5'-pGpA(2'-5') + H(+). It carries out the reaction 5'-pGpA(2'-5') + H2O = 5'-GpA(2'-5') + phosphate. The catalysed reaction is a ribonucleoside 5'-triphosphate + H2O = a ribonucleoside 5'-diphosphate + phosphate + H(+). It catalyses the reaction ATP + H2O = ADP + phosphate + H(+). Cyclic-nucleotide phosphodiesterase that acts as a negative regulator of innate immunity by mediating degradation of 2',3'-cGAMP, thereby inhibiting the cGAS-STING signaling. Specifically linearizes 2',3'-cGAMP into 2'5'-bond pGpA and further hydrolyzes pGpA to produce GpA. Also has in vitro nucleotide phosphodiesterase activity with nucleoside triphosphates, such as ATP. Has in vitro activity with p-nitrophenyl-TMP. Has lower activity with nucleoside diphosphates, and no activity with nucleoside monophosphates. Has in vitro activity with CDP-choline, giving rise to CMP and phosphocholine. Has in vitro activity with CDP-ethanolamine. Does not have sphingomyelin phosphodiesterase activity. This Rattus norvegicus (Rat) protein is Cyclic GMP-AMP phosphodiesterase SMPDL3A (Smpdl3a).